Here is a 453-residue protein sequence, read N- to C-terminus: RuvB-like helicase 1 (453 aa).

Residue 71-78 (GGPGTGKT) participates in ATP binding.

Belongs to the RuvB family. As to quaternary structure, may form heterododecamers with RVB2. Component of the SWR1 chromatin remodeling complex, the INO80 chromatin remodeling complex, and of the R2TP complex.

The protein localises to the nucleus. The enzyme catalyses ATP + H2O = ADP + phosphate + H(+). In terms of biological role, DNA helicase which participates in several chromatin remodeling complexes, including the SWR1 and the INO80 complexes. The SWR1 complex mediates the ATP-dependent exchange of histone H2A for the H2A variant HZT1 leading to transcriptional regulation of selected genes by chromatin remodeling. The INO80 complex remodels chromatin by shifting nucleosomes and is involved in DNA repair. Also involved in pre-rRNA processing. The sequence is that of RuvB-like helicase 1 (RVB1) from Yarrowia lipolytica (strain CLIB 122 / E 150) (Yeast).